The primary structure comprises 426 residues: Glutamate-1-semialdehyde 2,1-aminomutase (426 aa).

At Lys-265 the chain carries N6-(pyridoxal phosphate)lysine.

It belongs to the class-III pyridoxal-phosphate-dependent aminotransferase family. HemL subfamily. In terms of assembly, homodimer. Requires pyridoxal 5'-phosphate as cofactor.

It localises to the cytoplasm. The enzyme catalyses (S)-4-amino-5-oxopentanoate = 5-aminolevulinate. The protein operates within porphyrin-containing compound metabolism; protoporphyrin-IX biosynthesis; 5-aminolevulinate from L-glutamyl-tRNA(Glu): step 2/2. This Escherichia coli (strain SMS-3-5 / SECEC) protein is Glutamate-1-semialdehyde 2,1-aminomutase.